We begin with the raw amino-acid sequence, 618 residues long: Prothrombin (618 aa).

A signal peptide spans 1 to 24; it reads MSHVRGLGLPGCLALAALVSLVHS. Positions 25-43 are excised as a propeptide; it reads QHVFLAPQQALSLLQRVRR. The region spanning 44 to 90 is the Gla domain; that stretch reads ANSGFLEELRKGNLERECVEEQCSYEEAFEALESPQDTDVFWAKYTV. 4-carboxyglutamate occurs at positions 50, 51, 58, 60, 63, 64, 69, 70, 73, and 76. Cys61 and Cys66 are disulfide-bonded. Cystine bridges form between Cys91–Cys104, Cys109–Cys187, Cys130–Cys170, Cys158–Cys182, Cys215–Cys293, Cys236–Cys276, Cys264–Cys288, Cys333–Cys479, Cys388–Cys404, and Cys533–Cys547. Kringle domains are found at residues 109 to 187 and 215 to 292; these read CAMD…VPVC and CLTE…NLNY. 2 N-linked (GlcNAc...) asparagine glycosylation sites follow: Asn122 and Asn144. Residues 361–615 form the Peptidase S1 domain; the sequence is IVEGWDAEKG…LKRWIQKVID (255 aa). The active-site Charge relay system is His403. Asn413 carries N-linked (GlcNAc...) asparagine glycosylation. The active-site Charge relay system is Asp459. The high affinity receptor-binding region which is also known as the TP508 peptide stretch occupies residues 548-570; that stretch reads AGFKVNDTKRGDACEGDSGGPFV. Asn553 is a glycosylation site (N-linked (GlcNAc...) asparagine). Cys561 and Cys591 are disulfide-bonded. Ser565 functions as the Charge relay system in the catalytic mechanism.

It belongs to the peptidase S1 family. In terms of assembly, heterodimer (named alpha-thrombin) of a light and a heavy chain; disulfide-linked. Forms a heterodimer with SERPINA5. In plasma, interacts (via N-terminus) with alpha-1-microglobulin; this interaction does not prevent the activation of prothrombin to thrombin. Post-translationally, the gamma-carboxyglutamyl residues, which bind calcium ions, result from the carboxylation of glutamyl residues by a microsomal enzyme, the vitamin K-dependent carboxylase. The modified residues are necessary for the calcium-dependent interaction with a negatively charged phospholipid surface, which is essential for the conversion of prothrombin to thrombin. In terms of processing, in the penultimate step of the coagulation cascade, prothrombin is converted to thrombin by the prothrombinase complex composed of factor Xa (F10), cofactor Va (F5), and phospholipids. This activation requires factor Xa-catalyzed sequential cleavage at 2 sites, Arg-311 and Arg-360, along 2 possible pathways. In the first pathway, the first cleavage occurs at Arg-311, leading to the formation of the inactive intermediate prethrombin-2. This pathway preferentially occurs on platelets and in the absence of cofactor Va. In the second pathway, the first cleavage occurs at Arg-360, which separates protease domain into 2 chains that remain connected through a disulfide bond and generates the active intermediate meizothrombin. The presence of cofactor Va directs activation along the meizothrombin pathway and greatly accelerates the rate of cleavage at Arg-360, but has a smaller effect on the cleavage of meizothrombin at Arg-311. Meizothrombin accumulates as an intermediate when prothrombinase is assembled on the membrane of red blood cells.

It catalyses the reaction Selective cleavage of Arg-|-Gly bonds in fibrinogen to form fibrin and release fibrinopeptides A and B.. Its activity is regulated as follows. Activity is promoted in the presence of negatively charged surfaces, such as polyphosphate and dextran sulfate. Inhibited by SERPINA5. Functionally, thrombin, which cleaves bonds after Arg and Lys, converts fibrinogen to fibrin and activates factors V, VII, VIII, XIII, and, in complex with thrombomodulin, protein C. Functions in blood homeostasis, inflammation and wound healing. Activates coagulation factor XI (F11); activation is promoted by the contact with negatively charged surfaces. Triggers the production of pro-inflammatory cytokines, such as MCP-1/CCL2 and IL8/CXCL8, in endothelial cells. This Mus musculus (Mouse) protein is Prothrombin (F2).